Reading from the N-terminus, the 166-residue chain is Probable chemoreceptor glutamine deamidase CheD (166 aa).

This sequence belongs to the CheD family.

The enzyme catalyses L-glutaminyl-[protein] + H2O = L-glutamyl-[protein] + NH4(+). Probably deamidates glutamine residues to glutamate on methyl-accepting chemotaxis receptors (MCPs), playing an important role in chemotaxis. The protein is Probable chemoreceptor glutamine deamidase CheD of Desulforamulus reducens (strain ATCC BAA-1160 / DSM 100696 / MI-1) (Desulfotomaculum reducens).